A 687-amino-acid polypeptide reads, in one-letter code: Polyphosphate kinase (687 aa).

Asn-45 is a binding site for ATP. Residues Arg-375 and Arg-405 each coordinate Mg(2+). The Phosphohistidine intermediate role is filled by His-435. ATP-binding residues include Tyr-472, Arg-568, and His-596.

It belongs to the polyphosphate kinase 1 (PPK1) family. Mg(2+) serves as cofactor. In terms of processing, an intermediate of this reaction is the autophosphorylated ppk in which a phosphate is covalently linked to a histidine residue through a N-P bond.

The catalysed reaction is [phosphate](n) + ATP = [phosphate](n+1) + ADP. Catalyzes the reversible transfer of the terminal phosphate of ATP to form a long-chain polyphosphate (polyP). This is Polyphosphate kinase from Burkholderia lata (strain ATCC 17760 / DSM 23089 / LMG 22485 / NCIMB 9086 / R18194 / 383).